Consider the following 240-residue polypeptide: Probable xyloglucan-specific endo-beta-1,4-glucanase A (240 aa).

The signal sequence occupies residues 1-15 (MKFLTPLVLSSLASA).

It belongs to the glycosyl hydrolase 12 (cellulase H) family.

The protein localises to the secreted. The catalysed reaction is xyloglucan + H2O = xyloglucan oligosaccharides.. Functionally, catalyzes endohydrolysis of 1,4-beta-D-glucosidic linkages in xyloglucan with retention of the beta-configuration of the glycosyl residues. Specific for xyloglucan and does not hydrolyze other cell wall components. The protein is Probable xyloglucan-specific endo-beta-1,4-glucanase A (xgeA) of Aspergillus oryzae (strain ATCC 42149 / RIB 40) (Yellow koji mold).